A 257-amino-acid chain; its full sequence is BTB/POZ domain-containing protein kctd15-like (257 aa).

Phosphoserine occurs at positions 9 and 12. Residues 30 to 100 form the BTB domain; sequence APVHIDVGGH…LRTSKLLLPE (71 aa).

This chain is BTB/POZ domain-containing protein kctd15-like (kctd15l), found in Danio rerio (Zebrafish).